A 475-amino-acid polypeptide reads, in one-letter code: Arginine/ornithine antiporter (475 aa).

12 helical membrane passes run 10 to 30 (IGLLALIALVISSSIGSGVFG), 42 to 62 (GPVLIAWVIVGFGILMLALSL), 74 to 94 (GIFSYAEKGFGPFAGFISGWG), 101 to 121 (LGNVTFATILMSALGYFFPIF), 157 to 177 (LVTICKLIPLFVFIIFGIVLF), 205 to 225 (NCMMVMMWVFVGIEGASMLSA), 238 to 258 (ILGLVSLLAIYILASVLPYGY), 283 to 303 (WGGYFIGVGLIISILGAWLSW), 333 to 353 (PTFALVVTAGLIQVFLFTLLF), 361 to 381 (AYSLCTASIIVCYMLVAAYQI), 397 to 417 (LLIGVLALLFEIAGILMAGVS), and 451 to 471 (WLITTIIVIGAIIGIWLVVSG).

Belongs to the amino acid-polyamine-organocation (APC) superfamily. Basic amino acid/polyamine antiporter (APA) (TC 2.A.3.2) family.

It localises to the cell membrane. The catalysed reaction is L-ornithine(in) + L-arginine(out) = L-ornithine(out) + L-arginine(in). Its function is as follows. Catalyzes electroneutral exchange between L-arginine and L-ornithine. The chain is Arginine/ornithine antiporter (arcD) from Latilactobacillus sakei (Lactobacillus sakei).